We begin with the raw amino-acid sequence, 289 residues long: uncharacterized protein (289 aa).

9 helical membrane-spanning segments follow: residues 4–24 (NLLAVLFALASALTIAWGTVV), 44–64 (LNALMTPMWWAGMSTAMLAYF), 68–88 (VALGFGTLLVVQPVLVLSLMF), 106–126 (IFWATLLTVAVGIMIVLGRPL), 138–158 (IPVLLVGVAVMGGMWLLAEYV), 166–186 (ILGLVTGALFGYVAVMSKAAV), 196–216 (GLILNWEGYGLILTALLGTIV), 230–250 (LPAMTIAEPIVAFSLGYLVLG), and 258–278 (WEWIAMGIALLVMIVSTIALS).

Its subcellular location is the cell membrane. This is an uncharacterized protein from Corynebacterium glutamicum (strain ATCC 13032 / DSM 20300 / JCM 1318 / BCRC 11384 / CCUG 27702 / LMG 3730 / NBRC 12168 / NCIMB 10025 / NRRL B-2784 / 534).